Reading from the N-terminus, the 613-residue chain is DNA repair and telomere maintenance protein nbs1 (613 aa).

In terms of domain architecture, FHA spans 23–86 (YIVGRNVSDD…FGTKVNEKVV (64 aa)). BRCT domains are found at residues 107-186 (FTIN…YLST) and 228-302 (GFSC…KIII). Serine 355 carries the phosphoserine modification. Disordered stretches follow at residues 381–428 (KEPE…GQGK) and 546–613 (TEVF…KFHF). Positions 387 to 399 (LSNQSNNGSAQNK) are enriched in polar residues. Over residues 400–409 (KSGDNSEKTK) the composition is skewed to basic and acidic residues. Low complexity predominate over residues 574–592 (SSDKSGKSSISKKSSNSFK). A FxF/Y motif motif is present at residues 611–613 (FHF).

It belongs to the Nibrin family. Component of the MRN complex composed of two heterodimers rad32 and rad50 associated with a single nbs1. Interacts with (phosphorylated) ctp1/CtIP. Interacts (via FxF/Y motif) with tel1/atm.

It is found in the nucleus. The protein localises to the chromosome. Its subcellular location is the telomere. In terms of biological role, component of the MRN complex, which plays a central role in double-strand break (DSB) repair, DNA recombination, maintenance of telomere integrity and meiosis. The MRN complex is involved in the repair of DNA double-strand breaks (DSBs) via homologous recombination (HR), an error-free mechanism which primarily occurs during S and G2 phases. The complex (1) mediates the end resection of damaged DNA, which generates proper single-stranded DNA, a key initial steps in HR, and is (2) required for the recruitment of other repair factors and efficient activation of tel1/atm upon DNA damage. The MRN complex possesses single-strand endonuclease activity and double-strand-specific 3'-5' exonuclease activity, which are provided by MRE11, to initiate end resection, which is required for single-strand invasion and recombination. Within the MRN complex, nbs1 acts as a protein-protein adapter, which specifically recognizes and binds phosphorylated proteins, promoting their recruitment to DNA damage sites. Recruits rad32 and rad50 components of the MRN complex to DSBs in response to DNA damage. Promotes the recruitment of tel1/atm to the DNA damage sites, activating tel1/atm function. Mediates the recruitment of phosphorylated ctp1/CtIP to DSBs, leading to cooperation between the MRN complex and ctp1/CtIP to initiate end resection. This chain is DNA repair and telomere maintenance protein nbs1, found in Schizosaccharomyces pombe (strain 972 / ATCC 24843) (Fission yeast).